Reading from the N-terminus, the 392-residue chain is FK506-binding protein 4 (392 aa).

2 disordered regions span residues 58–116 (NPEL…NEID) and 161–284 (GNYV…PKTK). Composition is skewed to acidic residues over residues 73–86 (DGLE…EQEA), 104–116 (SESE…NEID), and 172–219 (SDSD…DASD). Residues Ser-80 and Ser-82 each carry the phosphoserine modification. Composition is skewed to basic and acidic residues over residues 220-234 (IESR…DEKK) and 252-279 (SAKP…ESKP). Positions 306-392 (GTRVGMRYVG…TFDVKLVSMK (87 aa)) constitute a PPIase FKBP-type domain.

This sequence belongs to the FKBP-type PPIase family. FKBP3/4 subfamily. Binds to histones H3 and H4. Interacts with NOP53.

It is found in the nucleus. The catalysed reaction is [protein]-peptidylproline (omega=180) = [protein]-peptidylproline (omega=0). Its function is as follows. PPIase that acts as a histone chaperone. Histone proline isomerase that increases the rate of cis-trans isomerization at 'Pro-17' (H3P16), 'Pro-31' (H3P30) and 'Pro-39 (H3P38) on the histone H3 N-terminal tail. H3P16 and H3P30 are the major proline targets with little activity shown against H3P38. H3P38 isomerization influences SET2-mediated H3K36 methylation thereby regulating gene expression. The sequence is that of FK506-binding protein 4 from Saccharomyces cerevisiae (strain ATCC 204508 / S288c) (Baker's yeast).